The chain runs to 482 residues: Major cardiolipin synthase ClsA (482 aa).

Helical transmembrane passes span 3–23 (ISSI…IIVI) and 34–54 (WAWL…YLLF). 2 PLD phosphodiesterase domains span residues 217–244 (LNYR…GDEY) and 395–422 (DNGF…DVRS). Active-site residues include His-222, Lys-224, Asp-229, His-400, Lys-402, and Asp-407.

It belongs to the phospholipase D family. Cardiolipin synthase subfamily.

It is found in the cell membrane. The enzyme catalyses 2 a 1,2-diacyl-sn-glycero-3-phospho-(1'-sn-glycerol) = a cardiolipin + glycerol. Functionally, catalyzes the reversible phosphatidyl group transfer from one phosphatidylglycerol molecule to another to form cardiolipin (CL) (diphosphatidylglycerol) and glycerol. The polypeptide is Major cardiolipin synthase ClsA (clsA) (Bacillus subtilis (strain 168)).